Consider the following 183-residue polypeptide: Regulatory protein RecX (183 aa).

Over residues M1–S12 the composition is skewed to polar residues. Residues M1–A26 form a disordered region.

It belongs to the RecX family.

The protein localises to the cytoplasm. Its function is as follows. Modulates RecA activity. The sequence is that of Regulatory protein RecX from Mycobacterium sp. (strain JLS).